Reading from the N-terminus, the 307-residue chain is Ribosomal RNA small subunit methyltransferase H (307 aa).

Residues 38–40 (GGH), aspartate 58, phenylalanine 82, aspartate 99, and glutamine 106 each bind S-adenosyl-L-methionine.

It belongs to the methyltransferase superfamily. RsmH family.

Its subcellular location is the cytoplasm. It catalyses the reaction cytidine(1402) in 16S rRNA + S-adenosyl-L-methionine = N(4)-methylcytidine(1402) in 16S rRNA + S-adenosyl-L-homocysteine + H(+). Functionally, specifically methylates the N4 position of cytidine in position 1402 (C1402) of 16S rRNA. This Variovorax paradoxus (strain S110) protein is Ribosomal RNA small subunit methyltransferase H.